The chain runs to 20 residues: Unknown protein NF003 from 2D-PAGE (20 aa).

The protein is Unknown protein NF003 from 2D-PAGE of Naegleria fowleri (Brain eating amoeba).